We begin with the raw amino-acid sequence, 1394 residues long: Cyclic nucleotide-gated channel beta-1 (1394 aa).

3 disordered regions span residues 1–95, 112–253, and 271–675; these read MLGW…AHSS, VPQP…QDSA, and VIRG…SQNS. Topologically, residues 1–762 are cytoplasmic; sequence MLGWVQRVLP…WKKYQFPQSI (762 aa). Polar residues-rich tracts occupy residues 68–86 and 116–125; these read PQGTQETALTPPTSLQAQV and AHSSRPSQNI. Composition is skewed to basic and acidic residues over residues 300–312 and 336–355; these read EESHLILEEVDPH and DEEKGKVVEQTPRELPRIQE. Positions 356 to 387 are enriched in acidic residues; that stretch reads EKEDEEEEKEDGEEEEEEGREKEEEEGEEKEE. Residues 388-408 show a composition bias toward basic and acidic residues; it reads EEGREKEEEEGEKKEEEGREK. The span at 409 to 418 shows a compositional bias: acidic residues; the sequence is EEEEGGEKED. Residues 419-433 are compositionally biased toward basic and acidic residues; the sequence is EEGREKEEEEGRGKE. 2 stretches are compositionally biased toward acidic residues: residues 452 to 464 and 481 to 490; these read EGREEEEDEEEEQ and DRSEESETQD. Low complexity-rich tracts occupy residues 493–508 and 529–554; these read EVGGAQAQGEVGGAQA and EVGGAQAQGEVGGAQEQDGVGGAQDQ. The span at 654–675 shows a compositional bias: polar residues; it reads DPTSPQGTDDQDRATSTASQNS. Residues 671–681 form a calmodulin-binding CaM1 region; that stretch reads ASQNSAIINDR. The IQ-like signature appears at 682 to 692; sequence LQELVKLFKER. Positions 699–732 are disordered; the sequence is KLIDPDVTSDEESPKPSPAKKAPEPAPEVKPAEA. A helical transmembrane segment spans residues 763 to 793; it reads DPLTNLMYILWLFFVVLAWNWNCWLIPVRWA. Over 794-798 the chain is Extracellular; sequence FPYQT. The chain crosses the membrane as a helical span at residues 799–825; sequence PDNIHLWLLMDYLCDLIYLLDITVFQM. At 826 to 837 the chain is on the cytoplasmic side; that stretch reads RLQFVRGGDIIT. Residues 838–861 form a helical membrane-spanning segment; it reads DKKEMRNNYVKSQRFKMDMLCLLP. The Extracellular portion of the chain corresponds to 862–872; the sequence is LDLLYLKFGVN. A helical membrane pass occupies residues 873 to 887; the sequence is PLLRLPRCLKYMAFF. Topologically, residues 888 to 900 are cytoplasmic; that stretch reads EFNNRLESILSKA. Residues 900-999 form an ion conduction pathway region; it reads AYVYRVIRTT…IGQMRDVVGA (100 aa). The helical transmembrane segment at 901–922 threads the bilayer; sequence YVYRVIRTTAYLLYSLHLNSCL. The Extracellular portion of the chain corresponds to 923-931; that stretch reads YYWASAYEG. The next 2 membrane-spanning stretches (helical) occupy residues 932–974 and 975–1002; these read LGST…EIVF and QGLNYFTGVFAFSVMIGQMRDVVGAATA. The segment at 959 to 962 is selectivity filter; that stretch reads TIGG. At 1003–1394 the chain is on the cytoplasmic side; that stretch reads GQTYYRSCMD…EEARKEKEEE (392 aa). The interval 1082–1198 is cyclic nucleotide-binding domain; sequence RQMIFDMLKR…LLRKKARRML (117 aa). G1143, E1144, S1146, R1156, and T1157 together coordinate 3',5'-cyclic GMP. Position 1156 (R1156) interacts with 3',5'-cyclic AMP. The calmodulin-binding CaM2 stretch occupies residues 1261–1267; sequence QQQLLEQ. Residues 1265–1394 are disordered; the sequence is LEQAKSSEDA…EEARKEKEEE (130 aa). Over residues 1285 to 1326 the composition is skewed to pro residues; sequence EQPPRPEPPAPEAPAPEPTAPEPLAPEAPAPEAPAPSSPPPA. Composition is skewed to basic and acidic residues over residues 1329–1345 and 1364–1376; these read ERPEGDKDAARPEEHPV and VPEKQEEKEKKEE.

The protein belongs to the cyclic nucleotide-gated cation channel (TC 1.A.1.5) family. CNGB1 subfamily. The rod cyclic nucleotide-gated channel is a heterotetramer composed of CNGA1 and CNGB1 subunits with 3:1 stoichiometry. CNGA1:CNGB1 channel binds Ca(2+)-bound CALM1 via CaM1 and CaM2 regions of the CNGB1 subunit; this interaction modulates the affinity of the channel for cNMPs in response to intracellular Ca(2+) levels. The olfactory cyclic nucleotide-gated channel is a heterotetramer composed of CNGA2, CNGA4 and CNGB1 subunits with 2:1:1 stoichiometry. Retina, testis, kidney, heart and brain.

It is found in the membrane. The enzyme catalyses Ca(2+)(in) = Ca(2+)(out). The catalysed reaction is Na(+)(in) = Na(+)(out). It carries out the reaction K(+)(in) = K(+)(out). It catalyses the reaction NH4(+)(in) = NH4(+)(out). The enzyme catalyses Rb(+)(in) = Rb(+)(out). The catalysed reaction is Li(+)(in) = Li(+)(out). It carries out the reaction Cs(+)(in) = Cs(+)(out). Functionally, pore-forming subunit of the rod cyclic nucleotide-gated channel. Mediates rod photoresponses at dim light converting transient changes in intracellular cGMP levels into electrical signals. In the dark, cGMP levels are high and keep the channel open enabling a steady inward current carried by Na(+) and Ca(2+) ions that leads to membrane depolarization and neurotransmitter release from synaptic terminals. Upon photon absorption cGMP levels decline leading to channel closure and membrane hyperpolarization that ultimately slows neurotransmitter release and signals the presence of light, the end point of the phototransduction cascade. Pore-forming subunit of the olfactory cyclic nucleotide-gated channel. Operates in the cilia of olfactory sensory neurons where chemical stimulation of the odorant is converted to an electrical signal. Mediates odorant-induced cAMP-dependent Ca(2+) influx triggering neuron depolarization. The rise of intracellular Ca(2+) levels potentiates the olfactory response by activating Ca(2+)-dependent Cl(-) channels, but it also serves as a negative feedback signal to desensitize the channel for rapid adaptation to odorants. Conducts cGMP- and cAMP-gated ion currents, with permeability for monovalent and divalent cations. The selectivity for Ca(2+) over Na(+) increases with cGMP concentrations, whereas the selectivity among monovalent ions is independent of the cGMP levels. In Bos taurus (Bovine), this protein is Cyclic nucleotide-gated channel beta-1.